We begin with the raw amino-acid sequence, 188 residues long: HTH-type transcriptional regulator QacR (188 aa).

One can recognise an HTH tetR-type domain in the interval 1-61; that stretch reads MNLKDKILGV…EILNIEESKW (61 aa). Residues 24 to 43 constitute a DNA-binding region (H-T-H motif); it reads TTGEIVKLSESSKGNLYYHF.

Homodimer. Binds cooperatively to DNA as a pair of dimers.

In terms of biological role, transcriptional repressor of qacA. Binds to IR1, an unusually long 28 bp operator, which is located downstream from the qacA promoter and overlaps its transcription start site. QacR is induced from its IR1 site by binding to one of many structurally dissimilar cationic lipophilic compounds, which are also substrates of QacA. In Staphylococcus aureus (strain Mu50 / ATCC 700699), this protein is HTH-type transcriptional regulator QacR (qacR).